The chain runs to 455 residues: uncharacterized protein (455 aa).

N42, N49, and N70 each carry an N-linked (GlcNAc...) asparagine glycan. The next 4 helical transmembrane spans lie at 127 to 147 (AILI…TWIF), 153 to 173 (SLLD…MFRI), 177 to 197 (ICAL…ITYY), and 377 to 397 (YKFC…EIIF). A glycan (N-linked (GlcNAc...) asparagine) is linked at N403.

It is found in the membrane. This is an uncharacterized protein from Caenorhabditis elegans.